A 364-amino-acid polypeptide reads, in one-letter code: RNA-binding protein ZC3H11 (364 aa).

A C3H1-type zinc finger spans residues 64–92 (RYKTKLCKNFVQYGTCPYDIRCMFAHGEE). Positions 194 to 199 (VRHNPY) match the MKT1-binding motif motif. The interval 340-364 (EQSQSHLKREGNEGRGEGLHMFLSL) is disordered. Basic and acidic residues predominate over residues 346–357 (LKREGNEGRGEG).

Interacts (via MKT1-binding motif) with MKT1. Interacts with PBP1 (via C-terminus); the interaction is direct. Phosphorylated at the N-terminus. CK1.2-dependent phosphorylation may lead to proteasome-dependent degradation of ZC3H11 in absence of stress.

The protein resides in the cytoplasm. Its function is as follows. RNA-binding protein involved in regulation of mRNA stability. Binds AU-rich regions in the 3'-UTR of mRNAs and promotes their stabilization by recruiting a MKT1-containing complex. Stabilizes chaperone mRNAs during stress that causes an accumulation of misfolded or unfolded proteins in the cytoplasm. This chain is RNA-binding protein ZC3H11, found in Trypanosoma brucei brucei (strain 927/4 GUTat10.1).